The sequence spans 785 residues: MDPKMLFCLPEGDALFNPLNTMFIQMACILVFSQFFYLFLKPCGQAGPVAQILAGIVLSLLTIIRKVHEFFLQKDSASYYIFFSFLLRTAFVFLIGLEIDLDFMKRNLKNSIVITLGSLVISGIIWLPFLWFLIRFMQIKGDFLTFYLAFLITLSNTAAPVVIRSIIDWKLHTSEIGRLAISCGLFIEITNIFIYTIVLSFISGTMTADIFIYSFATGVIILTNRFLASWLPKRNPKEKYLSKAETLAFIILILIIALTIESSNLNSTLFVFIIGLMFPREGKTYRTLIQRLSYPIHEFVLPVYFGYIGFRFSVNSLTKRHYLVLGMTVALSLLGKLLGVLFACSFLKIPKQYWLFLSTMLSVKGHIGLVLLDSNLMYKKWFTPVVHDMFVAALVIMTLLSGVITSLLLRSQEKSFAHIKTSLELFDTTEELRVLTCVYGVRHARGSISLVSALSGFSPGTSSSPFTPYLMHLIPLPKKRKTELLYHELDEDAGNSNGGDDEFGTNEGLEINDSIDSFTRDRKIMVRQVKLVAPMENMHEEICNATEDLRVSIVFLPFHKHQRIDGKTTNDGEVFRHMNRKVLKQAQCSIGIFVDRNITGFHQLHGSDSVQHVAALFFGGPDDREALSLCKWLTNNSQIHLTVIQFVADDSKTEKIVGDAVTKENNEVFLEIVSEDQTENETDRIFLEEFYHRFVTTGQVGFIEKRVSNGMQTLTILREIGEMYSLFVVGKNRGDCPMTSGMNDWEECPELGTVGDFLASSNMDVNASVLVVQRHRNSFDSFVDE.

The next 12 helical transmembrane spans lie at 19 to 39 (LNTM…FYLF), 44 to 64 (GQAG…LTII), 79 to 99 (YYIF…GLEI), 112 to 132 (IVIT…FLWF), 143 to 163 (FLTF…PVVI), 179 to 199 (LAIS…TIVL), 201 to 221 (FISG…GVII), 240 to 260 (YLSK…ALTI), 294 to 314 (YPIH…RFSV), 323 to 343 (LVLG…VLFA), 352 to 372 (QYWL…LVLL), and 389 to 409 (MFVA…SLLL).

The protein belongs to the monovalent cation:proton antiporter 2 (CPA2) transporter (TC 2.A.37) family. CHX (TC 2.A.37.4) subfamily. As to expression, specifically expressed in pollen.

The protein resides in the membrane. In terms of biological role, may operate as a cation/H(+) antiporter. The chain is Cation/H(+) antiporter 1 (CHX1) from Arabidopsis thaliana (Mouse-ear cress).